A 330-amino-acid polypeptide reads, in one-letter code: Trans-1,2-dihydrobenzene-1,2-diol dehydrogenase (330 aa).

It belongs to the Gfo/Idh/MocA family. Homodimer.

It carries out the reaction (1R,2R)-1,2-dihydrobenzene-1,2-diol + NADP(+) = catechol + NADPH + H(+). The enzyme catalyses D-xylose + NADP(+) = D-xylono-1,5-lactone + NADPH + H(+). This Xenopus laevis (African clawed frog) protein is Trans-1,2-dihydrobenzene-1,2-diol dehydrogenase (dhdh).